We begin with the raw amino-acid sequence, 190 residues long: Guanylate kinase (190 aa).

Residues 7-186 enclose the Guanylate kinase-like domain; it reads GKLIVFSAPS…AVDDVEAAIV (180 aa). 14 to 21 serves as a coordination point for ATP; that stretch reads APSGAGKT.

It belongs to the guanylate kinase family.

The protein resides in the cytoplasm. The catalysed reaction is GMP + ATP = GDP + ADP. Functionally, essential for recycling GMP and indirectly, cGMP. The chain is Guanylate kinase from Chlorobium chlorochromatii (strain CaD3).